We begin with the raw amino-acid sequence, 142 residues long: Protein-export protein SecB (142 aa).

Belongs to the SecB family. As to quaternary structure, homotetramer, a dimer of dimers. One homotetramer interacts with 1 SecA dimer.

The protein resides in the cytoplasm. One of the proteins required for the normal export of preproteins out of the cell cytoplasm. It is a molecular chaperone that binds to a subset of precursor proteins, maintaining them in a translocation-competent state. It also specifically binds to its receptor SecA. This chain is Protein-export protein SecB, found in Buchnera aphidicola subsp. Acyrthosiphon pisum (strain 5A).